The sequence spans 70 residues: Large ribosomal subunit protein eL38 (70 aa).

A Glycyl lysine isopeptide (Lys-Gly) (interchain with G-Cter in SUMO2) cross-link involves residue Lys4. An N6-acetyllysine; alternate modification is found at Lys9. Lys9 participates in a covalent cross-link: Glycyl lysine isopeptide (Lys-Gly) (interchain with G-Cter in SUMO2); alternate. An N6-acetyllysine modification is found at Lys67.

The protein belongs to the eukaryotic ribosomal protein eL38 family. Component of the large ribosomal subunit.

The protein localises to the cytoplasm. Its function is as follows. Component of the large ribosomal subunit. The ribosome is a large ribonucleoprotein complex responsible for the synthesis of proteins in the cell. The chain is Large ribosomal subunit protein eL38 (Rpl38) from Mus musculus (Mouse).